Reading from the N-terminus, the 1279-residue chain is Sterol regulatory element-binding protein cleavage-activating protein (1279 aa).

Topologically, residues 1–18 (MTLTERLREKISRAFYNH) are cytoplasmic. A helical transmembrane segment spans residues 19 to 39 (GLLCASYPIPIILFTGFCILA). Over 40 to 279 (CCYPLLKLPL…SLVHVHFKEE (240 aa)) the chain is Lumenal. A loop-1 region spans residues 46–284 (KLPLPGTGPV…HFKEEIGVAE (239 aa)). The interval 60 to 80 (PVKDYSPPPVDSDRKQGEPTE) is disordered. N-linked (GlcNAc...) asparagine glycosylation occurs at asparagine 263. Residues 280–300 (IGVAELIPLVTTYIILFAYIY) form a helical membrane-spanning segment. The SSD domain occupies 284-442 (ELIPLVTTYI…MLFFTTVLSI (159 aa)). Residues 301–312 (FSTRKIDMVKSK) are Cytoplasmic-facing. Residues 313 to 333 (WGLALAAVVTVLSSLLMSVGL) traverse the membrane as a helical segment. At 334–344 (CTLFGLTPTLN) the chain is on the lumenal side. The chain crosses the membrane as a helical span at residues 345 to 365 (GGEIFPYLVVVIGLENVLVLT). Residues 366–401 (KSVVSTPVDLEVKLRIAQGLSSESWSIMKNMATELG) lie on the Cytoplasmic side of the membrane. A helical transmembrane segment spans residues 402–422 (IILIGYFTLVPAIQEFCLFAV). Residue valine 423 is a topological domain, lumenal. The chain crosses the membrane as a helical span at residues 424–444 (GLVSDFFLQMLFFTTVLSIDI). At 445–518 (RRMELADLNK…FLARTRLAQR (74 aa)) the chain is on the cytoplasmic side. The ER export signal motif lies at 447–452 (MELADL). Glycyl lysine isopeptide (Lys-Gly) (interchain with G-Cter in ubiquitin) cross-links involve residues lysine 454 and lysine 466. The chain crosses the membrane as a helical span at residues 519 to 539 (LIMAGTVVWIGILVYTDPAGL). Residues 535–710 (DPAGLRNYLA…QAHGDVTLYK (176 aa)) are loop-7. At 540–709 (RNYLAAQVTE…VQAHGDVTLY (170 aa)) the chain is on the lumenal side. Residues 579–615 (IFPPDAPKLPENQTSPGESPERGGPAEVVHDSPVPEV) form a disordered region. Residues asparagine 590 and asparagine 641 are each glycosylated (N-linked (GlcNAc...) asparagine). Residues 668-696 (EGRHPQDGRSAWPPPGPIPAGHWEAGPKG) are disordered. Residues 710–730 (KVAALGLATGIVLVLLLLCLY) traverse the membrane as a helical segment. At 731–1279 (RVLCPRNYGQ…YVPSVLEKLD (549 aa)) the chain is on the cytoplasmic side. Residues 731 to 1279 (RVLCPRNYGQ…YVPSVLEKLD (549 aa)) form an interaction with SREBF2 region. A WD 1 repeat occupies 771 to 811 (VLRGHLMDIECLASDGMLLVSCCLAGHVCVWDAQTGDCLTR). A disordered region spans residues 811–904 (RIPRPGRQRR…PRHRAVCGRS (94 aa)). Phosphoserine is present on residues serine 822, serine 838, and serine 851. A compositionally biased stretch (polar residues) spans 877–891 (IDTNFSAQPRSSQPT). 2 positions are modified to phosphoserine: serine 907 and serine 937. Positions 931-962 (PALRPPSPGPVLSQAPEDEGGSPEKGSPSLAW) are disordered. WD repeat units follow at residues 952–1002 (SPEK…LCCS) and 1005–1042 (EVSS…ALSP). Omega-N-methylarginine is present on arginine 1051. WD repeat units lie at residues 1077–1114 (AHQK…CLFT), 1117–1155 (GHSG…RVSH), 1158–1195 (AHRG…KFYS), and 1197–1235 (QQDL…LLQT).

The protein belongs to the WD repeat SCAP family. Membrane region forms a homotetramer. Component of the SCAP-SREBP complex (composed of SCAP and SREBF1/SREBP1 or SREBF2/SREBP2); interacts with SREBF1/SREBP1 or SREBF2/SREBP2 through its C-terminal cytoplasmic domain. Forms a ternary complex with INSIG1 or INSIG2 through its transmembrane domains at high sterol concentrations. Interacts with PAQR3; the interaction anchors the SCAP-SREBP complex to the Golgi apparatus in low cholesterol conditions. Interacts with the SEC23-SEC24 complex in a SAR1-GTP-dependent manner through an ER export signal in its third cytoplasmic loop. Interacts with RNF139; the interaction inhibits the interaction of SCAP with SEC24B and hampering the ER to Golgi transport of the SCAP-SREBP complex. Interacts with SPRING1. Post-translationally, ubiquitinated at Lys-454 and Lys-466. RNF145 triggers ubiquitination of SCAP, likely inhibiting SCAP-SREBP complex transport to the Golgi apparatus and the subsequent processing/maturation of SREBF2/SREBP2.

It is found in the endoplasmic reticulum membrane. The protein resides in the golgi apparatus membrane. Its subcellular location is the cytoplasmic vesicle. It localises to the COPII-coated vesicle membrane. In terms of biological role, escort protein required for cholesterol as well as lipid homeostasis. Regulates export of the SCAP-SREBP complex from the endoplasmic reticulum to the Golgi upon low cholesterol, thereby regulating the processing of sterol regulatory element-binding proteins (SREBPs) SREBF1/SREBP1 and SREBF2/SREBP2. At high sterol concentrations, formation of a ternary complex with INSIG (INSIG1 or INSIG2) leads to mask the ER export signal in SCAP, promoting retention of the complex in the endoplasmic reticulum. Low sterol concentrations trigger release of INSIG, a conformational change in the SSD domain of SCAP, unmasking of the ER export signal, promoting recruitment into COPII-coated vesicles and transport of the SCAP-SREBP to the Golgi: in the Golgi, SREBPs are then processed, releasing the transcription factor fragment of SREBPs from the membrane, its import into the nucleus and up-regulation of LDLR, INSIG1 and the mevalonate pathway. Binds cholesterol via its SSD domain. This chain is Sterol regulatory element-binding protein cleavage-activating protein, found in Homo sapiens (Human).